We begin with the raw amino-acid sequence, 51 residues long: Large ribosomal subunit protein eL39 (51 aa).

Residues 1 to 15 (MAAKKSFKIKQKLAK) show a composition bias toward basic residues. A disordered region spans residues 1-21 (MAAKKSFKIKQKLAKAKNQNR).

It belongs to the eukaryotic ribosomal protein eL39 family. In terms of assembly, interacts with YIH1.

The sequence is that of Large ribosomal subunit protein eL39 (RPL39) from Eremothecium gossypii (strain ATCC 10895 / CBS 109.51 / FGSC 9923 / NRRL Y-1056) (Yeast).